Reading from the N-terminus, the 126-residue chain is UPF0344 protein ABC2900 (126 aa).

The next 4 helical transmembrane spans lie at 16 to 36, 43 to 63, 66 to 86, and 104 to 124; these read ASHE…YFLF, AGTI…VTGA, LIAY…VLLI, and GMLF…YGII.

This sequence belongs to the UPF0344 family.

The protein resides in the cell membrane. This chain is UPF0344 protein ABC2900, found in Shouchella clausii (strain KSM-K16) (Alkalihalobacillus clausii).